Here is an 81-residue protein sequence, read N- to C-terminus: ATP synthase subunit c (81 aa).

A run of 2 helical transmembrane segments spans residues 5-25 (VAAA…IGPG) and 57-77 (LAFM…LLFA).

This sequence belongs to the ATPase C chain family. In terms of assembly, F-type ATPases have 2 components, F(1) - the catalytic core - and F(0) - the membrane proton channel. F(1) has five subunits: alpha(3), beta(3), gamma(1), delta(1), epsilon(1). F(0) has four main subunits: a(1), b(1), b'(1) and c(10-14). The alpha and beta chains form an alternating ring which encloses part of the gamma chain. F(1) is attached to F(0) by a central stalk formed by the gamma and epsilon chains, while a peripheral stalk is formed by the delta, b and b' chains.

Its subcellular location is the cellular thylakoid membrane. F(1)F(0) ATP synthase produces ATP from ADP in the presence of a proton or sodium gradient. F-type ATPases consist of two structural domains, F(1) containing the extramembraneous catalytic core and F(0) containing the membrane proton channel, linked together by a central stalk and a peripheral stalk. During catalysis, ATP synthesis in the catalytic domain of F(1) is coupled via a rotary mechanism of the central stalk subunits to proton translocation. Functionally, key component of the F(0) channel; it plays a direct role in translocation across the membrane. A homomeric c-ring of between 10-14 subunits forms the central stalk rotor element with the F(1) delta and epsilon subunits. The sequence is that of ATP synthase subunit c from Microcystis aeruginosa (strain NIES-843 / IAM M-2473).